The primary structure comprises 1489 residues: WD repeat-containing protein 7 (1489 aa).

WD repeat units follow at residues 17-56 (APTH…EVNP), 62-104 (GHTA…CIEF), 156-199 (ISPD…SGMQ), 324-366 (VICP…EKQE), 404-443 (NEPL…IVQL), 462-507 (GHRN…MKHI), and 558-597 (RHLF…LDRC). Disordered stretches follow at residues 754–783 (IKEH…YRAS) and 911–947 (GDHM…QGQI). Basic and acidic residues predominate over residues 767 to 782 (EARRQSREDSDPEYRA). At Ser935 the chain carries Phosphoserine. WD repeat units follow at residues 1350–1389 (PAIC…CQTI) and 1391–1431 (GHKG…LGSI). Position 1455 is a phosphoserine (Ser1455).

The sequence is that of WD repeat-containing protein 7 (Wdr7) from Mus musculus (Mouse).